A 226-amino-acid polypeptide reads, in one-letter code: Ribonuclease 3 (226 aa).

Residues 6-128 (INRLQRKLGY…LIGAIFLDSD (123 aa)) enclose the RNase III domain. Glutamate 41 contributes to the Mg(2+) binding site. Residue aspartate 45 is part of the active site. Positions 114 and 117 each coordinate Mg(2+). Glutamate 117 is a catalytic residue. The region spanning 155–225 (DPKTRLQEYL…AEQALKQLEL (71 aa)) is the DRBM domain.

It belongs to the ribonuclease III family. As to quaternary structure, homodimer. Requires Mg(2+) as cofactor.

The protein localises to the cytoplasm. The catalysed reaction is Endonucleolytic cleavage to 5'-phosphomonoester.. In terms of biological role, digests double-stranded RNA. Involved in the processing of primary rRNA transcript to yield the immediate precursors to the large and small rRNAs (23S and 16S). Processes some mRNAs, and tRNAs when they are encoded in the rRNA operon. Processes pre-crRNA and tracrRNA of type II CRISPR loci if present in the organism. The chain is Ribonuclease 3 from Photorhabdus laumondii subsp. laumondii (strain DSM 15139 / CIP 105565 / TT01) (Photorhabdus luminescens subsp. laumondii).